The primary structure comprises 94 residues: Protein FAM24B (94 aa).

The first 21 residues, 1 to 21, serve as a signal peptide directing secretion; sequence MPVIAGGILAALLLLIVVVLC.

It belongs to the FAM24 family.

It localises to the secreted. The sequence is that of Protein FAM24B (FAM24B) from Homo sapiens (Human).